The following is a 70-amino-acid chain: Large ribosomal subunit protein bL31 (70 aa).

4 residues coordinate Zn(2+): Cys16, Cys18, Cys37, and Cys40.

It belongs to the bacterial ribosomal protein bL31 family. Type A subfamily. In terms of assembly, part of the 50S ribosomal subunit. It depends on Zn(2+) as a cofactor.

Functionally, binds the 23S rRNA. The polypeptide is Large ribosomal subunit protein bL31 (Shewanella oneidensis (strain ATCC 700550 / JCM 31522 / CIP 106686 / LMG 19005 / NCIMB 14063 / MR-1)).